A 138-amino-acid chain; its full sequence is Low molecular weight protein-tyrosine-phosphatase PtpB (138 aa).

The active-site Nucleophile is the C7. R13 is an active-site residue. The active-site Proton donor is the D111.

Belongs to the low molecular weight phosphotyrosine protein phosphatase family.

It catalyses the reaction O-phospho-L-tyrosyl-[protein] + H2O = L-tyrosyl-[protein] + phosphate. Its function is as follows. Dephosphorylates the phosphotyrosine-containing proteins. In Staphylococcus haemolyticus (strain JCSC1435), this protein is Low molecular weight protein-tyrosine-phosphatase PtpB (ptpB).